The following is an 827-amino-acid chain: Putative potassium transporter 12 (827 aa).

Positions 1 to 31 (MEEIEEGSSNNSIRRVGTGSSDRRWVDGSEV) are disordered. Topologically, residues 1–82 (MEEIEEGSSN…AGSHGHNLKD (82 aa)) are cytoplasmic. Residues 83–103 (LSLLTTLGIAFQTLGVVYGDM) traverse the membrane as a helical segment. The Extracellular segment spans residues 104–129 (GTSPLYVFSDVFSKVPIRSEVDVLGA). A helical transmembrane segment spans residues 130–150 (LSLVIYTIAVIPLAKYVFVVL). Topologically, residues 151–216 (KANDNGEGGT…ALETKGYLKT (66 aa)) are cytoplasmic. Residues 217–237 (LLLLLVLMGTSMIIGDGILTP) form a helical membrane-spanning segment. Over 238 to 253 (AMSVMSAMSGLQGEVK) the chain is Extracellular. A helical transmembrane segment spans residues 254–274 (GFGTNALVMSSIVILVALFSI). Over 275 to 281 (QRFGTGK) the chain is Cytoplasmic. A helical membrane pass occupies residues 282–302 (VGFLFAPVLALWFFSLGAIGI). At 303–335 (YNLLKYDFTVIRALNPFYIVLFFNKNSKQAWSA) the chain is on the extracellular side. The helical transmembrane segment at 336-356 (LGGCVLCITGAEAMFADLGHF) threads the bilayer. Residues 357–363 (SVRSIQM) lie on the Cytoplasmic side of the membrane. A helical transmembrane segment spans residues 364 to 384 (AFTCVVFPCLLLAYMGQAAYL). The Extracellular portion of the chain corresponds to 385-402 (TKHPEASARIFYDSVPKS). Residues 403 to 423 (LFWPVFVIATLAAMIASQAMI) traverse the membrane as a helical segment. Residues 424-454 (SATFSCVKQAMALGCFPRLKIIHTSKKRIGQ) lie on the Cytoplasmic side of the membrane. Residues 455-475 (IYIPVINWFLMIMCILVVSIF) form a helical membrane-spanning segment. Residues 476 to 480 (RSTTH) are Extracellular-facing. The next 2 helical transmembrane spans lie at 481 to 501 (IANA…VLVT) and 502 to 522 (LVML…PLIF). The Extracellular portion of the chain corresponds to 523 to 536 (GSVETIYLLAVLTK). Residues 537 to 557 (ILEGGWVPLVFATFFLTVMYI) traverse the membrane as a helical segment. Topologically, residues 558 to 827 (WNYGSVLKYQ…ILQAGMTYMV (270 aa)) are cytoplasmic. The tract at residues 728-750 (RSEPEQELDSEVLPSSSVGSSME) is disordered. Residues 738 to 748 (EVLPSSSVGSS) show a composition bias toward low complexity.

The protein belongs to the HAK/KUP transporter (TC 2.A.72.3) family.

It is found in the cell membrane. Functionally, putative potassium transporter. The chain is Putative potassium transporter 12 (POT12) from Arabidopsis thaliana (Mouse-ear cress).